Here is a 412-residue protein sequence, read N- to C-terminus: Serine hydroxymethyltransferase (412 aa).

Residues leucine 121 and 125–127 (GHL) each bind (6S)-5,6,7,8-tetrahydrofolate. Lysine 230 is subject to N6-(pyridoxal phosphate)lysine. 353–355 (TPF) is a binding site for (6S)-5,6,7,8-tetrahydrofolate.

It belongs to the SHMT family. In terms of assembly, homodimer. It depends on pyridoxal 5'-phosphate as a cofactor.

The protein localises to the cytoplasm. The catalysed reaction is (6R)-5,10-methylene-5,6,7,8-tetrahydrofolate + glycine + H2O = (6S)-5,6,7,8-tetrahydrofolate + L-serine. The protein operates within one-carbon metabolism; tetrahydrofolate interconversion. It participates in amino-acid biosynthesis; glycine biosynthesis; glycine from L-serine: step 1/1. Functionally, catalyzes the reversible interconversion of serine and glycine with tetrahydrofolate (THF) serving as the one-carbon carrier. This reaction serves as the major source of one-carbon groups required for the biosynthesis of purines, thymidylate, methionine, and other important biomolecules. Also exhibits THF-independent aldolase activity toward beta-hydroxyamino acids, producing glycine and aldehydes, via a retro-aldol mechanism. This chain is Serine hydroxymethyltransferase, found in Finegoldia magna (strain ATCC 29328 / DSM 20472 / WAL 2508) (Peptostreptococcus magnus).